A 301-amino-acid polypeptide reads, in one-letter code: Glutathione transport system permease protein GsiD (301 aa).

Helical transmembrane passes span 37–57 (VAVAAGLFVLLLIAIAFWAQY), 103–123 (LAAGIFSVLVGMMIGTTLGLL), 141–161 (VLFAFPGILLAIAVVAIMGSG), 162–182 (MANVVVAVAIFSIPAFARLVR), 220–240 (IVVFFSMRIGMSIITAASLSF), and 264–284 (VIAPHVAIFPSLAIFLTVLAF). The 190-residue stretch at 99-288 (TRISLAAGIF…LTVLAFNLLG (190 aa)) folds into the ABC transmembrane type-1 domain.

Belongs to the binding-protein-dependent transport system permease family. The complex is composed of two ATP-binding proteins (GsiA), two transmembrane proteins (GsiC and GsiD) and a solute-binding protein (GsiB).

The protein localises to the cell inner membrane. In terms of biological role, part of the ABC transporter complex GsiABCD involved in glutathione import. Probably responsible for the translocation of the substrate across the membrane. The chain is Glutathione transport system permease protein GsiD from Pectobacterium atrosepticum (strain SCRI 1043 / ATCC BAA-672) (Erwinia carotovora subsp. atroseptica).